The chain runs to 85 residues: Anti-neuroexcitation peptide 2 (85 aa).

The first 21 residues, 1–21 (MKLSLLLVISASMLIDGLVNA), serve as a signal peptide directing secretion. The LCN-type CS-alpha/beta domain occupies 22–82 (DGYIRGSNGC…TWKSESNTCG (61 aa)). Intrachain disulfides connect C31–C81, C35–C56, C42–C63, and C46–C65.

This sequence belongs to the long (4 C-C) scorpion toxin superfamily. Sodium channel inhibitor family. Beta subfamily. Expressed by the venom gland.

It is found in the secreted. Its function is as follows. Binds to sodium channels (Nav) and inhibits them. Recombinant ANEP delays the convulsion seizure of insect models by 18% and shows anti-neuroexcitatory activity. This Olivierus martensii (Manchurian scorpion) protein is Anti-neuroexcitation peptide 2.